The primary structure comprises 547 residues: Alpha-1,3-mannosyl-glycoprotein 4-beta-N-acetylglucosaminyltransferase B (547 aa).

The Cytoplasmic portion of the chain corresponds to 1–7; that stretch reads MRLRNGT. The chain crosses the membrane as a helical; Signal-anchor for type II membrane protein span at residues 8–28; the sequence is FLTVLLFGLCGLISLSWYTAF. Topologically, residues 29 to 547 are lumenal; that stretch reads SNSKGNVVDI…LSEIFIKKAE (519 aa). Residues 36–83 adopt a coiled-coil conformation; sequence VDIYQREFLALRDRLHSAEQENLKRSKELNLVLDEIKRAIAEKQALRD. Residues N85, N101, and N464 are each glycosylated (N-linked (GlcNAc...) asparagine).

The protein belongs to the glycosyltransferase 54 family. It depends on a divalent metal cation as a cofactor. N-glycosylated.

The protein resides in the golgi apparatus membrane. The catalysed reaction is N(4)-{beta-D-GlcNAc-(1-&gt;2)-alpha-D-Man-(1-&gt;3)-[beta-D-GlcNAc-(1-&gt;2)-alpha-D-Man-(1-&gt;6)]-beta-D-Man-(1-&gt;4)-beta-D-GlcNAc-(1-&gt;4)-beta-D-GlcNAc}-L-asparaginyl-[protein] + UDP-N-acetyl-alpha-D-glucosamine = N(4)-{beta-D-GlcNAc-(1-&gt;2)-[beta-D-GlcNAc-(1-&gt;4)]-alpha-D-Man-(1-&gt;3)-[beta-D-GlcNAc-(1-&gt;2)-alpha-D-Man-(1-&gt;6)]-beta-D-Man-(1-&gt;4)-beta-D-GlcNAc-(1-&gt;4)-beta-D-GlcNAc}-L-asparaginyl-[protein] + UDP + H(+). The enzyme catalyses an N(4)-{beta-D-GlcNAc-(1-&gt;2)-alpha-D-Man-(1-&gt;3)-[alpha-D-Man-(1-&gt;6)]-beta-D-Man-(1-&gt;4)-beta-D-GlcNAc-(1-&gt;4)-beta-D-GlcNAc}-L-asparaginyl-[protein] + UDP-N-acetyl-alpha-D-glucosamine = an N(4)-{beta-D-GlcNAc-(1-&gt;2)-[beta-D-GlcNAc-(1-&gt;4)]-alpha-D-Man-(1-&gt;3)-[alpha-D-Man-(1-&gt;6)]-beta-D-Man-(1-&gt;4)-beta-D-GlcNAc-(1-&gt;4)-beta-D-GlcNAc}-L-asparaginyl-[protein] + UDP + H(+). It catalyses the reaction an N(4)-{beta-D-GlcNAc-(1-&gt;2)-alpha-D-Man-(1-&gt;3)-[beta-D-GlcNAc-(1-&gt;2)-[beta-D-GlcNAc-(1-&gt;6)]-alpha-D-Man-(1-&gt;6)]-beta-D-Man-(1-&gt;4)-beta-D-GlcNAc-(1-&gt;4)-beta-D-GlcNAc}-L-asparaginyl-[protein] + UDP-N-acetyl-alpha-D-glucosamine = an N(4)-{beta-D-GlcNAc-(1-&gt;2)-[beta-D-GlcNAc-(1-&gt;4)]-alpha-D-Man-(1-&gt;3)-[beta-D-GlcNAc-(1-&gt;2)-[beta-D-GlcNAc-(1-&gt;6)]-alpha-D-Man-(1-&gt;6)]-beta-D-Man-(1-&gt;4)-beta-D-GlcNAc-(1-&gt;4)-beta-D-GlcNAc}-L-asparaginyl-[protein] + UDP + H(+). It carries out the reaction an N(4)-{beta-D-GlcNAc-(1-&gt;2)-alpha-D-Man-(1-&gt;3)-[beta-D-GlcNAc-(1-&gt;2)-alpha-D-Man-(1-&gt;6)]-beta-D-Man-(1-&gt;4)-beta-D-GlcNAc-(1-&gt;4)-[alpha-L-Fuc-(1-&gt;6)]-beta-D-GlcNAc}-L-asparaginyl-[protein] + UDP-N-acetyl-alpha-D-glucosamine = N(4)-{beta-D-GlcNAc-(1-&gt;2)-[beta-D-GlcNAc-(1-&gt;4)]-alpha-D-Man-(1-&gt;3)-[beta-D-GlcNAc-(1-&gt;2)-alpha-D-Man-(1-&gt;6)]-beta-D-Man-(1-&gt;4)-beta-D-GlcNAc-(1-&gt;4)-[alpha-L-Fuc-(1-&gt;6)]-beta-D-GlcNAc}-asparaginyl-[protein] + UDP + H(+). The catalysed reaction is an N(4)-{beta-D-GlcNAc-(1-&gt;2)-alpha-D-Man-(1-&gt;3)-[beta-D-Gal-(1-&gt;4)-beta-D-GlcNAc-(1-&gt;2)-alpha-D-Man-(1-&gt;6)]-beta-D-Man-(1-&gt;4)-beta-D-GlcNAc-(1-&gt;4)-beta-D-GlcNAc}-L-asparaginyl-[protein] + UDP-N-acetyl-alpha-D-glucosamine = an N(4)-{beta-D-GlcNAc-(1-&gt;2)-[beta-D-GlcNAc-(1-&gt;4)]-alpha-D-Man-(1-&gt;3)-[beta-D-Gal-(1-&gt;4)-beta-D-GlcNAc-(1-&gt;2)-alpha-D-Man-(1-&gt;6)]-beta-D-Man-(1-&gt;4)-beta-D-GlcNAc-(1-&gt;4)-beta-D-GlcNAc}-L-asparaginyl-[protein] + UDP + H(+). The enzyme catalyses N(4)-{beta-D-GlcNAc-(1-&gt;2)-alpha-D-Man-(1-&gt;3)-[alpha-D-Man-(1-&gt;3)-{alpha-D-Man-(1-&gt;6)}-alpha-D-Man-(1-&gt;6)]-beta-D-Man-(1-&gt;4)-beta-D-GlcNAc-(1-&gt;4)-beta-D-GlcNAc}-asparaginyl-[protein] + UDP-N-acetyl-alpha-D-glucosamine = N(4)-{beta-D-GlcNAc-(1-&gt;2)-[beta-D-GlcNAc-(1-&gt;4)]-alpha-D-Man-(1-&gt;3)-[alpha-D-Man-(1-&gt;3)-{alpha-D-Man-(1-&gt;6)}-alpha-D-Man-(1-&gt;6)]-beta-D-Man-(1-&gt;4)-beta-D-GlcNAc-(1-&gt;4)-beta-D-GlcNAc}-asparaginyl-[protein] + UDP + H(+). It catalyses the reaction N(4)-{beta-D-GlcNAc-(1-&gt;2)-alpha-D-Man-(1-&gt;3)-beta-D-Man-(1-&gt;4)-beta-D-GlcNAc-(1-&gt;4)-beta-D-GlcNAc}-asparaginyl-[protein] + UDP-N-acetyl-alpha-D-glucosamine = N(4)-{beta-D-GlcNAc-(1-&gt;2)-[beta-D-GlcNAc-(1-&gt;4)]-alpha-D-Man-(1-&gt;3)-beta-D-Man-(1-&gt;4)-beta-D-GlcNAc-(1-&gt;4)-beta-D-GlcNAc}-asparaginyl-[protein] + UDP + H(+). Its pathway is protein modification; protein glycosylation. Glycosyltransferase that catalyze the transfer of GlcNAc from UDP-GlcNAc to the GlcNAcbeta1-2Manalpha1-3 arm of the core structure of N-linked glycans through a beta1-4 linkage and participates in the production of tri- and tetra-antennary N-linked sugar chains. Prefers complex-type N-glycans over hybrid-types. Has lower affinities for donors or acceptors than MGAT4A, suggesting that, under physiological conditions, it is not the main contributor in N-glycan biosynthesis. This is Alpha-1,3-mannosyl-glycoprotein 4-beta-N-acetylglucosaminyltransferase B (mgat4bQ9UQ53) from Danio rerio (Zebrafish).